The chain runs to 1355 residues: NACHT, LRR and PYD domains-containing protein 1 homolog (1355 aa).

The NACHT domain occupies K257–C458. Position 263–270 (G263–S270) interacts with ATP. The interval D977–F1109 is ZU5. An FIIND domain is found at D977–S1252. The interval S1110 to S1252 is UPA. A CARD domain is found at L1278 to D1354.

Belongs to the NLRP family. As to quaternary structure, interacts with the C-terminal part of nlrp1 (NACHT, LRR and PYD domains-containing protein 1, C-terminus) in absence of pathogens and other damage-associated signals. Interacts with the N-terminal part of nlrp1 (NACHT, LRR and PYD domains-containing protein 1, N-terminus) in absence of pathogens and other damage-associated signals. Homomultimer; forms the nlrp1 inflammasome polymeric complex, a filament composed of homopolymers of this form in response to pathogens and other damage-associated signals. The nlrp1 inflammasome polymeric complex associates with pycard/asc. Interacts (via CARD domain) with pycard/asc (via CARD domain); leading to pro-inflammatory caspases (caspa and/or caspb) recruitment. Pro-caspase-a and pro-caspase-b filament formation increases local enzyme concentration, resulting in trans-autocleavage and activation. Active caspa and caspb then processes il1b and il18 precursors, leading to the release of mature cytokines in the extracellular milieu and inflammatory response. In terms of processing, autocatalytically cleaved. Autocatalytic cleavage in FIIND region occurs constitutively, prior to activation signals, and is required for inflammasome activity (IL1B release), possibly by facilitating pro-inflammatory caspases (caspa and/or caspb) binding. Both N- and C-terminal parts remain associated non-covalently. Post-translationally, ubiquitinated in response to pathogen-associated signals, leading to its degradation by the proteasome and subsequent release of the cleaved C-terminal part of the protein (NACHT, LRR and PYD domains-containing protein 1, C-terminus), which polymerizes and forms the nlrp1 inflammasome. Expressed in adult spleen, head kidney, gill and skin and also in the embryo.

It is found in the cytoplasm. It localises to the inflammasome. Its activity is regulated as follows. nlrp1 inflammasome is activated by pathogens and other damage-associated signals: activation promotes ubiquitination and degradation of the N-terminal part, releasing the cleaved C-terminal part of the protein (NACHT, LRR and PYD domains-containing protein 1, C-terminus), which polymerizes and forms the nlrp1 inflammasome. Its function is as follows. Acts as the sensor component of the nlrp1 inflammasome, which mediates inflammasome activation in response to various pathogen-associated signals, leading to subsequent pyroptosis. Inflammasomes are supramolecular complexes that assemble in the cytosol in response to pathogens and other damage-associated signals and play critical roles in innate immunity and inflammation. Acts as a recognition receptor (PRR): recognizes specific pathogens and other damage-associated signals, and mediates the formation of the inflammasome polymeric complex. In response to pathogen-associated signals, the N-terminal part of nlrp1 is degraded by the proteasome, releasing the cleaved C-terminal part of the protein (NACHT, LRR and PYD domains-containing protein 1, C-terminus), which polymerizes to initiate the formation of the inflammasome complex: the inflammasome recruits and activate pro-inflammatory caspases (caspa and/or caspb), leading to pyroptosis. Functionally, constitutes the precursor of the nlrp1 inflammasome, which mediates autoproteolytic processing within the FIIND domain to generate the N-terminal and C-terminal parts, which are associated non-covalently in absence of pathogens and other damage-associated signals. In terms of biological role, regulatory part that prevents formation of the nlrp1 inflammasome: in absence of pathogens and other damage-associated signals, interacts with the C-terminal part of nlrp1 (NACHT, LRR and PYD domains-containing protein 1, C-terminus), preventing activation of the nlrp1 inflammasome. In response to pathogen-associated signals, this part is ubiquitinated and degraded by the proteasome, releasing the cleaved C-terminal part of the protein, which polymerizes and forms the nlrp1 inflammasome. Constitutes the active part of the nlrp1 inflammasome. In absence of pathogens and other damage-associated signals, interacts with the N-terminal part of nlrp1 (NACHT, LRR and PYD domains-containing protein 1, N-terminus), preventing activation of the nlrp1 inflammasome. In response to pathogen-associated signals, the N-terminal part of nlrp1 is degraded by the proteasome, releasing this form, which polymerizes to form the nlrp1 inflammasome complex: the nlrp1 inflammasome complex then directly recruits and activates pro-inflammatory caspases (caspa and/or caspb) activation, leading to subsequent pyroptosis. This is NACHT, LRR and PYD domains-containing protein 1 homolog from Danio rerio (Zebrafish).